The following is a 65-amino-acid chain: Large ribosomal subunit protein uL29 (65 aa).

The protein belongs to the universal ribosomal protein uL29 family.

This is Large ribosomal subunit protein uL29 from Buchnera aphidicola subsp. Schizaphis graminum (strain Sg).